Consider the following 196-residue polypeptide: Ribosome maturation factor RimP (196 aa).

The segment at 164–196 (LAPQKPNKPGPKKPGHDKKKPSNEPAAGKPRAE) is disordered. The segment covering 173-182 (GPKKPGHDKK) has biased composition (basic residues).

This sequence belongs to the RimP family.

It localises to the cytoplasm. Functionally, required for maturation of 30S ribosomal subunits. This Xanthomonas campestris pv. campestris (strain B100) protein is Ribosome maturation factor RimP.